A 326-amino-acid chain; its full sequence is MELDAIINQAQSQIDAAQDAATLDQVRVEFMGKKGKLTDLLKGLGKLSNEERPAAGQKINQAKQVIQQAISAKGEFLRTEELNKKLAEEAVDVTLPGRTEKPGNLHPVSRTIARIESFFGELGFSVKTGPEIEDGFHNFDALNIPANHPARADHDTFYFNPDMMLRTQTSGVQIRTMEAEKPPLRIISPGRVYRNDYDQTHTPMFHQVEGLMVDKNVSFTDLKGILHDFLHHFFEESLEIRFRPSYFPFTEPSAEVDVMGKNGQWLEVLGCGMVHPNVLKAVGIDPEEYTGFAFGMGVERLTMLRYGVNDLRAFFENDLRFLKQFN.

Glutamate 251 contacts Mg(2+).

This sequence belongs to the class-II aminoacyl-tRNA synthetase family. Phe-tRNA synthetase alpha subunit type 1 subfamily. In terms of assembly, tetramer of two alpha and two beta subunits. Requires Mg(2+) as cofactor.

The protein localises to the cytoplasm. It catalyses the reaction tRNA(Phe) + L-phenylalanine + ATP = L-phenylalanyl-tRNA(Phe) + AMP + diphosphate + H(+). The sequence is that of Phenylalanine--tRNA ligase alpha subunit from Alteromonas mediterranea (strain DSM 17117 / CIP 110805 / LMG 28347 / Deep ecotype).